A 352-amino-acid chain; its full sequence is UDP-N-acetylglucosamine--N-acetylmuramyl-(pentapeptide) pyrophosphoryl-undecaprenol N-acetylglucosamine transferase 2 (352 aa).

UDP-N-acetyl-alpha-D-glucosamine-binding positions include Ser11 to Gly13, Arg164, Ser194, and Gln289.

It belongs to the glycosyltransferase 28 family. MurG subfamily.

It localises to the cell membrane. The catalysed reaction is di-trans,octa-cis-undecaprenyl diphospho-N-acetyl-alpha-D-muramoyl-L-alanyl-D-glutamyl-meso-2,6-diaminopimeloyl-D-alanyl-D-alanine + UDP-N-acetyl-alpha-D-glucosamine = di-trans,octa-cis-undecaprenyl diphospho-[N-acetyl-alpha-D-glucosaminyl-(1-&gt;4)]-N-acetyl-alpha-D-muramoyl-L-alanyl-D-glutamyl-meso-2,6-diaminopimeloyl-D-alanyl-D-alanine + UDP + H(+). The protein operates within cell wall biogenesis; peptidoglycan biosynthesis. Cell wall formation. Catalyzes the transfer of a GlcNAc subunit on undecaprenyl-pyrophosphoryl-MurNAc-pentapeptide (lipid intermediate I) to form undecaprenyl-pyrophosphoryl-MurNAc-(pentapeptide)GlcNAc (lipid intermediate II). The protein is UDP-N-acetylglucosamine--N-acetylmuramyl-(pentapeptide) pyrophosphoryl-undecaprenol N-acetylglucosamine transferase 2 of Bacillus cereus (strain ATCC 14579 / DSM 31 / CCUG 7414 / JCM 2152 / NBRC 15305 / NCIMB 9373 / NCTC 2599 / NRRL B-3711).